Consider the following 232-residue polypeptide: 5'-methylthioadenosine/S-adenosylhomocysteine nucleosidase (232 aa).

Glutamate 12 (proton acceptor) is an active-site residue. Residues glycine 78, isoleucine 152, and 173–174 (ME) each bind substrate. Aspartate 197 acts as the Proton donor in catalysis.

It belongs to the PNP/UDP phosphorylase family. MtnN subfamily. Homodimer.

The enzyme catalyses S-adenosyl-L-homocysteine + H2O = S-(5-deoxy-D-ribos-5-yl)-L-homocysteine + adenine. The catalysed reaction is S-methyl-5'-thioadenosine + H2O = 5-(methylsulfanyl)-D-ribose + adenine. It catalyses the reaction 5'-deoxyadenosine + H2O = 5-deoxy-D-ribose + adenine. The protein operates within amino-acid biosynthesis; L-methionine biosynthesis via salvage pathway; S-methyl-5-thio-alpha-D-ribose 1-phosphate from S-methyl-5'-thioadenosine (hydrolase route): step 1/2. Functionally, catalyzes the irreversible cleavage of the glycosidic bond in both 5'-methylthioadenosine (MTA) and S-adenosylhomocysteine (SAH/AdoHcy) to adenine and the corresponding thioribose, 5'-methylthioribose and S-ribosylhomocysteine, respectively. Also cleaves 5'-deoxyadenosine, a toxic by-product of radical S-adenosylmethionine (SAM) enzymes, into 5-deoxyribose and adenine. Thus, is required for in vivo function of the radical SAM enzymes biotin synthase and lipoic acid synthase, that are inhibited by 5'-deoxyadenosine accumulation. This is 5'-methylthioadenosine/S-adenosylhomocysteine nucleosidase from Erwinia tasmaniensis (strain DSM 17950 / CFBP 7177 / CIP 109463 / NCPPB 4357 / Et1/99).